The sequence spans 92 residues: MASQQGQQTRKIPEQEKKDLDQRAAKGETVVPGGTRGKSLEAQERLAEGRSKGGQTRKDQLGTEGYKEMGKKGGQTTGDKSAGEREEEEEED.

The span at 1–10 shows a compositional bias: polar residues; sequence MASQQGQQTR. The segment at 1 to 92 is disordered; the sequence is MASQQGQQTR…GEREEEEEED (92 aa). Basic and acidic residues-rich tracts occupy residues 11–26 and 38–71; these read KIPE…RAAK and KSLE…EMGK.

This sequence belongs to the small hydrophilic plant seed protein family. In terms of tissue distribution, maximally expressed in dry seeds. Also present in mid-maturation embryos.

Its function is as follows. LEA proteins are late embryonic proteins abundant in higher plant seed embryos. They may play an essential role in seed survival and in controlling water exchanges during seed desiccation and imbibition. The chain is 10 kDa late embryogenesis abundant protein from Helianthus annuus (Common sunflower).